The following is a 430-amino-acid chain: Protein DSE3 (430 aa).

The residue at position 395 (Ser395) is a Phosphoserine.

It is found in the bud neck. Its function is as follows. May be involved in the establishment of the daughter fate. The chain is Protein DSE3 (DSE3) from Saccharomyces cerevisiae (strain ATCC 204508 / S288c) (Baker's yeast).